The sequence spans 925 residues: GPI ethanolamine phosphate transferase 1 (925 aa).

Residues 1-6 (MWNKHR) are Cytoplasmic-facing. The helical transmembrane segment at 7 to 27 (LAFILVGLLFHLFYLRSIFDI) threads the bilayer. Residues 28–457 (YFVSPLVHGM…TTYNWRFIRS (430 aa)) lie on the Lumenal side of the membrane. 6 N-linked (GlcNAc...) asparagine glycosylation sites follow: N90, N138, N198, N286, N312, and N358. The helical transmembrane segment at 458 to 478 (IVTLGFIGWITYSFTIFLRLF) threads the bilayer. Residues 479–492 (ILEKQYAMKTSPQN) lie on the Cytoplasmic side of the membrane. Residues 493–510 (LASFGALTAALNYVLYYQ) traverse the membrane as a helical segment. The Lumenal segment spans residues 511-516 (RSPFNY). The helical transmembrane segment at 517–537 (YMYLLFPLFFWSQILTNSTIL) threads the bilayer. Residues 538 to 547 (HDGIREMFKG) lie on the Cytoplasmic side of the membrane. A helical membrane pass occupies residues 548–568 (VSMLQRIGICALIVSIYEGIV). At 569 to 574 (YGYFDR) the chain is on the lumenal side. The helical transmembrane segment at 575 to 595 (WIFTIIFNLLALYPFFCGIKD) threads the bilayer. At 596–599 (AKTN) the chain is on the cytoplasmic side. Residues 600-620 (MFWGANSMALSIFTLFDAVKI) form a helical membrane-spanning segment. A topological domain (lumenal) is located at residue E621. Residues 622 to 642 (SLTQINVSGLLLVASGLYALW) form a helical membrane-spanning segment. Residues 643-653 (RVSKKINSHTK) are Cytoplasmic-facing. The chain crosses the membrane as a helical span at residues 654–674 (IVILLQILLLAMMLAVTNKSV). Topologically, residues 675-687 (TSLQQRAGLPTDA) are lumenal. A helical transmembrane segment spans residues 688 to 708 (KIAGWVILTLSLSLMPLLHYL). The Cytoplasmic portion of the chain corresponds to 709–719 (KPSNDYQVRVL). The helical transmembrane segment at 720–740 (VIYLTFAPTFLILTISFESFF) threads the bilayer. The Lumenal portion of the chain corresponds to 741–775 (YLLFTNYLMLWIEIESKIKAQNIAKNSQNWLQLLR). The chain crosses the membrane as a helical span at residues 776–796 (ISIIGFFLLQFAFFGTGNVAS). Residues 797-818 (ISSFSLDSVYRLMPVFDPFPMG) lie on the Cytoplasmic side of the membrane. A helical membrane pass occupies residues 819–839 (ALLILKIMIPYILLSTALGIM). Topologically, residues 840-848 (NLKLNIKDY) are lumenal. The helical transmembrane segment at 849 to 869 (TVSSLILSTSDVLSLNFFYLL) threads the bilayer. Topologically, residues 870–885 (RTEGSWLDIGVTISNY) are cytoplasmic. A helical transmembrane segment spans residues 886 to 906 (CLAILSSLFMIVLELFSHFLL). Residues 907-925 (KNVRDNGMDIAASKQQKRH) lie on the Lumenal side of the membrane.

The protein belongs to the PIGG/PIGN/PIGO family. PIGN subfamily.

It localises to the endoplasmic reticulum membrane. Its pathway is glycolipid biosynthesis; glycosylphosphatidylinositol-anchor biosynthesis. In terms of biological role, ethanolamine phosphate transferase involved in glycosylphosphatidylinositol-anchor biosynthesis. Transfers ethanolamine phosphate to the first alpha-1,4-linked mannose of the glycosylphosphatidylinositol precursor of GPI-anchor. This is GPI ethanolamine phosphate transferase 1 (MCD4) from Eremothecium gossypii (strain ATCC 10895 / CBS 109.51 / FGSC 9923 / NRRL Y-1056) (Yeast).